The sequence spans 378 residues: Tyrosinase-like protein phomQ1' (378 aa).

Residues 42–62 form a helical membrane-spanning segment; that stretch reads TIIVVSVITFAAIIGCWVFLS. Positions 130 and 139 each coordinate Cu cation. An N-linked (GlcNAc...) asparagine glycan is attached at asparagine 209. Cu cation contacts are provided by histidine 279 and histidine 305.

It belongs to the tyrosinase family. Cu(2+) serves as cofactor.

The protein resides in the membrane. The protein operates within mycotoxin biosynthesis. In terms of biological role, tyrosinase-like protein; part of the gene cluster that mediates the biosynthesis of the phomopsins, a group of hexapeptide mycotoxins which infects lupins and causes lupinosis disease in livestock. The pathway starts with the processing of the precursor phomA' by several endopeptidases including kexin proteases as well as the cluster-specific S41 family peptidase phomP1 and the oligopeptidase phomG' to produce 10 identical copies of the hexapeptide Tyr-Val-Ile-Pro-Ile-Asp. After being excised from the precursor peptide, the core peptides are cyclized and modified post-translationally by enzymes encoded within the gene cluster. The timing and order of proteolysis of the phomA' precursor and PTMs are still unknown. Two tyrosinase-like enzymes, phomQ1' and phomQ2, catalyze the chlorination and hydroxylation of Tyr, respectively. PhomYb, is proposed to be involved in the construction of the macrocyclic structure. The other 4 ustYa family proteins may be involved in PTMs that generate the unique structure of phomopsin A. PhomYa' is required for the hydroxylation of C-beta of Tyr. PhomYc', phomYd', and phomYe are responsible for the biosynthesis of 2,3-dehydroisoleucine (dIle), 2,3-dehydroaspartic acid (dAsp), and 3,4-dehydroproline (dPro), respectively. While dIle formation by phomYc' is indispensable for the installation of dAsp by phomYd', the order of the other PTMs have not been elucidated yet. Most of the biosynthetic enzymes likely have broad substrate specificity, and thus, there might be a metabolic grid from a precursor to phomopsin A. The enzyme(s) responsible for the biosynthesis of 3,4-dehydrovaline (dVal) have also not been identified yet. Finally, phomM' acts as an S-adenosylmethionine-dependent alpha-N-methyltransferase that catalyzes two successive N-methylation reactions, converting N-desmethyl-phomopsin A to phomopsin A and phomopsin A further to an N,N-dimethylated congener called phomopsin E. The protein is Tyrosinase-like protein phomQ1' of Diaporthe leptostromiformis (Lupinosis disease fungus).